We begin with the raw amino-acid sequence, 61 residues long: Large ribosomal subunit protein uL30 (61 aa).

It belongs to the universal ribosomal protein uL30 family. As to quaternary structure, part of the 50S ribosomal subunit.

This Chlorobium limicola (strain DSM 245 / NBRC 103803 / 6330) protein is Large ribosomal subunit protein uL30.